The following is a 99-amino-acid chain: UPF0235 protein ASA_3628 (99 aa).

It belongs to the UPF0235 family.

The sequence is that of UPF0235 protein ASA_3628 from Aeromonas salmonicida (strain A449).